A 444-amino-acid polypeptide reads, in one-letter code: Argininosuccinate synthase (444 aa).

Residues 18 to 26 and Ala-44 each bind ATP; that span reads AFSGGLDTS. Residue Tyr-100 participates in L-citrulline binding. Gly-130 and Thr-132 together coordinate ATP. L-aspartate-binding residues include Thr-132, Asn-136, and Asp-137. Asn-136 lines the L-citrulline pocket. An ATP-binding site is contributed by Asp-137. L-citrulline is bound by residues Arg-140 and Ser-193. Position 195 (Asp-195) interacts with ATP. 3 residues coordinate L-citrulline: Thr-202, Glu-204, and Glu-281.

Belongs to the argininosuccinate synthase family. Type 2 subfamily. In terms of assembly, homotetramer.

The protein localises to the cytoplasm. The catalysed reaction is L-citrulline + L-aspartate + ATP = 2-(N(omega)-L-arginino)succinate + AMP + diphosphate + H(+). Its pathway is amino-acid biosynthesis; L-arginine biosynthesis; L-arginine from L-ornithine and carbamoyl phosphate: step 2/3. In Histophilus somni (strain 2336) (Haemophilus somnus), this protein is Argininosuccinate synthase.